We begin with the raw amino-acid sequence, 382 residues long: Dodecanoyl-[acyl-carrier-protein] hydrolase, chloroplastic (382 aa).

A chloroplast-targeting transit peptide spans 1–83 (MATTSLASAF…FSAAEKQWTN (83 aa)). Active-site residues include N283, H285, and C320.

This sequence belongs to the acyl-ACP thioesterase family. In terms of assembly, forms homodimers. Expressed in developing cotyledons. Not detected in leaves.

Its subcellular location is the plastid. It is found in the chloroplast. It carries out the reaction dodecanoyl-[ACP] + H2O = dodecanoate + holo-[ACP] + H(+). Functionally, plays an essential role in chain termination during de novo fatty acid synthesis. High thioesterase activity for lauroyl-ACP versus other acyl-ACPs. This Umbellularia californica (California bay laurel) protein is Dodecanoyl-[acyl-carrier-protein] hydrolase, chloroplastic.